The following is a 305-amino-acid chain: tRNA pseudouridine synthase B (305 aa).

Asp-48 serves as the catalytic Nucleophile.

It belongs to the pseudouridine synthase TruB family. Type 1 subfamily.

It catalyses the reaction uridine(55) in tRNA = pseudouridine(55) in tRNA. Its function is as follows. Responsible for synthesis of pseudouridine from uracil-55 in the psi GC loop of transfer RNAs. The protein is tRNA pseudouridine synthase B of Pseudomonas putida (strain ATCC 700007 / DSM 6899 / JCM 31910 / BCRC 17059 / LMG 24140 / F1).